The sequence spans 379 residues: Guanine nucleotide-binding protein subunit alpha-12 (379 aa).

C11 carries the S-palmitoyl cysteine lipid modification. The G-alpha domain occupies 54–379 (RLVKILLLGA…QENLKDIMLQ (326 aa)). The interval 57 to 70 (KILLLGAGESGKST) is G1 motif. GTP is bound by residues 65–70 (ESGKST) and 200–203 (LLAR). A Mg(2+)-binding site is contributed by S69. Residues 198–206 (DILLARKAT) form a G2 motif region. A Mg(2+)-binding site is contributed by T206. A Phosphothreonine modification is found at T206. The tract at residues 221–230 (FKMVDVGGQR) is G3 motif. A G4 motif region spans residues 290–297 (ILFLNKMD). Residues 294 to 297 (NKMD) and A351 contribute to the GTP site. The segment at 349–354 (TTAIDT) is G5 motif.

This sequence belongs to the G-alpha family. G(12) subfamily. As to quaternary structure, g proteins are composed of 3 units; alpha, beta and gamma. The alpha chain contains the guanine nucleotide binding site. Interacts with UBXD5. Interacts (in GTP-bound form) with PPP5C (via TPR repeats); activates PPP5C phosphatase activity and translocates PPP5C to the cell membrane. Interacts with RGS22. Interacts (via N-terminus) with NAPA; the interaction promotes CDH5 localization to plasma membrane. Interacts with CTNND1 (via N-terminus); the interaction regulates CDH1-mediated cell-cell adhesion. Interacts with PPP2R1A; the interaction promotes protein phosphatase 2A activation causing dephosphorylation of MAPT. Interacts (in GTP-bound form) with ARHGEF1. Interacts (in GTP-bound form) with ARHGEF11 (via RGS domain). Interacts (in GTP-bound form) with ARHGEF12 (via RGS domain).

Its subcellular location is the cell membrane. The protein localises to the lateral cell membrane. It is found in the cytoplasm. Its function is as follows. Guanine nucleotide-binding proteins (G proteins) are involved as modulators or transducers in various transmembrane signaling systems. Activates effector molecule RhoA by binding and activating RhoGEFs (ARHGEF12/LARG). GNA12-dependent Rho signaling subsequently regulates transcription factor AP-1 (activating protein-1). GNA12-dependent Rho signaling also regulates protein phosphatese 2A activation causing dephosphorylation of its target proteins. Promotes tumor cell invasion and metastasis by activating RhoA/ROCK signaling pathway and up-regulating pro-inflammatory cytokine production. Inhibits CDH1-mediated cell adhesion in process independent from Rho activation. Together with NAPA promotes CDH5 localization to plasma membrane. May play a role in the control of cell migration through the TOR signaling cascade. This is Guanine nucleotide-binding protein subunit alpha-12 (Gna12) from Rattus norvegicus (Rat).